A 399-amino-acid chain; its full sequence is Elongation factor Tu (399 aa).

The tr-type G domain occupies 10-204 (KPHVNIGTIG…AVDASIPEPE (195 aa)). The tract at residues 19–26 (GHVDHGKT) is G1. A GTP-binding site is contributed by 19–26 (GHVDHGKT). Residue T26 participates in Mg(2+) binding. Positions 60–64 (GITIN) are G2. The tract at residues 81 to 84 (DCPG) is G3. Residues 81–85 (DCPGH) and 136–139 (NKCD) contribute to the GTP site. Positions 136–139 (NKCD) are G4. A G5 region spans residues 174-176 (SGL).

The protein belongs to the TRAFAC class translation factor GTPase superfamily. Classic translation factor GTPase family. EF-Tu/EF-1A subfamily. In terms of assembly, monomer.

It localises to the cytoplasm. The enzyme catalyses GTP + H2O = GDP + phosphate + H(+). Its function is as follows. GTP hydrolase that promotes the GTP-dependent binding of aminoacyl-tRNA to the A-site of ribosomes during protein biosynthesis. This chain is Elongation factor Tu, found in Prochlorococcus marinus (strain SARG / CCMP1375 / SS120).